The sequence spans 497 residues: tRNA-2-methylthio-N(6)-dimethylallyladenosine synthase (497 aa).

Residues 1–50 are disordered; that stretch reads MTGTSNIPTHGKEHKDAPALLPLPAPNPHHTHAAHPGDPSHDRPPSRGKL. Residues 48-165 enclose the MTTase N-terminal domain; that stretch reads GKLFIKTHGC…LPDMIRARRE (118 aa). Cys57, Cys94, Cys128, Cys202, Cys206, and Cys209 together coordinate [4Fe-4S] cluster. Residues 188–430 form the Radical SAM core domain; the sequence is RAEGPSAFVS…QKHINAYAAD (243 aa). Positions 433–496 constitute a TRAM domain; sequence KRMIGTVQTV…TNSLRGRVHT (64 aa).

It belongs to the methylthiotransferase family. MiaB subfamily. Monomer. It depends on [4Fe-4S] cluster as a cofactor.

The protein localises to the cytoplasm. The catalysed reaction is N(6)-dimethylallyladenosine(37) in tRNA + (sulfur carrier)-SH + AH2 + 2 S-adenosyl-L-methionine = 2-methylsulfanyl-N(6)-dimethylallyladenosine(37) in tRNA + (sulfur carrier)-H + 5'-deoxyadenosine + L-methionine + A + S-adenosyl-L-homocysteine + 2 H(+). Its function is as follows. Catalyzes the methylthiolation of N6-(dimethylallyl)adenosine (i(6)A), leading to the formation of 2-methylthio-N6-(dimethylallyl)adenosine (ms(2)i(6)A) at position 37 in tRNAs that read codons beginning with uridine. The sequence is that of tRNA-2-methylthio-N(6)-dimethylallyladenosine synthase from Xylella fastidiosa (strain M12).